A 197-amino-acid chain; its full sequence is 3-isopropylmalate dehydratase small subunit (197 aa).

Belongs to the LeuD family. LeuD type 1 subfamily. In terms of assembly, heterodimer of LeuC and LeuD.

The enzyme catalyses (2R,3S)-3-isopropylmalate = (2S)-2-isopropylmalate. Its pathway is amino-acid biosynthesis; L-leucine biosynthesis; L-leucine from 3-methyl-2-oxobutanoate: step 2/4. Its function is as follows. Catalyzes the isomerization between 2-isopropylmalate and 3-isopropylmalate, via the formation of 2-isopropylmaleate. This Geobacillus sp. (strain WCH70) protein is 3-isopropylmalate dehydratase small subunit.